We begin with the raw amino-acid sequence, 392 residues long: MEEVSSEMEVEVQNRQLSDSSPAQNVKKFGLKNSIQTNFGSDYVFQIVPKIDWTAIAVSLSTNTVKLYSPVTGQYYGECKGHSDTVNQIAFSSDSAASPHVLHSCSSDGTIRSWDTRSFQQVSRIDTGNDQEIFSFSYGGAADNLLAGGCKEQVLLWDWRNSKQVACLEESHMDDVTQVHFVPNKPNKLLSASVDGLICLFNTEGDINDDDHLESVINVGTSIGKIGFLGDGYKKLWCLTHIETLSIWNWEDGSCEVNLEKARELASDSWTQDNVDYFVDCHCPGGEDLWVIGGTCAGTVGYFPVNYKQPGSIGTAEAILGGGHIDVVRSVLQMPGEYGGAAGLFGWTGGEDGRLCCWKSDEDATEINRSWTSSELVVKPPRNRKKNRHSPY.

WD repeat units lie at residues 81 to 124 (GHSD…QVSR), 128 to 167 (GNDQEIFSFSYGGAADNLLAGGCKEQVLLWDWRNSKQVAC), 171 to 211 (SHMD…NDDD), and 323 to 368 (GHID…TEIN).

Expressed in germinating seeds, rosettes leaves, flowers and siliques.

Its function is as follows. Involved in the control of plant growth development. Acts as negative regulator of seed germination, cell division in meristematic regions, plant growth and overall biomass accumulation. May function by regulating ribosome activities and biogenesis in plant cells. This is WD repeat-containing protein GTS1 from Arabidopsis thaliana (Mouse-ear cress).